The chain runs to 1506 residues: ABC transporter C family member 9 (1506 aa).

Helical transmembrane passes span methionine 37 to valine 57, isoleucine 84 to phenylalanine 104, valine 116 to valine 136, methionine 150 to isoleucine 170, phenylalanine 179 to isoleucine 199, alanine 315 to isoleucine 335, leucine 350 to threonine 370, phenylalanine 427 to isoleucine 447, leucine 452 to proline 472, phenylalanine 541 to methionine 561, and alanine 567 to leucine 587. One can recognise an ABC transmembrane type-1 1 domain in the interval alanine 314 to glutamine 596. The region spanning valine 630 to alanine 853 is the ABC transporter 1 domain. Position 665-672 (glycine 665–serine 672) interacts with ATP. The next 5 membrane-spanning stretches (helical) occupy residues leucine 934–tryptophan 956, isoleucine 976–isoleucine 996, methionine 1048–valine 1068, leucine 1167–isoleucine 1187, and isoleucine 1191–tryptophan 1211. Residues valine 936–asparagine 1218 enclose the ABC transmembrane type-1 2 domain. The ABC transporter 2 domain occupies phenylalanine 1257–lysine 1489. Glycine 1289–serine 1296 serves as a coordination point for ATP.

This sequence belongs to the ABC transporter superfamily. ABCC family. Conjugate transporter (TC 3.A.1.208) subfamily. Ubiquitous.

Its subcellular location is the membrane. The catalysed reaction is ATP + H2O + xenobioticSide 1 = ADP + phosphate + xenobioticSide 2.. Functionally, pump for glutathione S-conjugates. The polypeptide is ABC transporter C family member 9 (ABCC9) (Arabidopsis thaliana (Mouse-ear cress)).